We begin with the raw amino-acid sequence, 87 residues long: uncharacterized protein (87 aa).

2 helical membrane-spanning segments follow: residues 7–27 and 64–84; these read LFFIQIVISIFNSHLAVLYSI and GINIFSFSISLFLIFLTIPLF.

The protein localises to the membrane. This is an uncharacterized protein from Schizosaccharomyces pombe (strain 972 / ATCC 24843) (Fission yeast).